A 311-amino-acid polypeptide reads, in one-letter code: Oxygen-dependent coproporphyrinogen-III oxidase (311 aa).

Residue serine 100 coordinates substrate. A divalent metal cation is bound by residues histidine 104 and histidine 114. Histidine 114 serves as the catalytic Proton donor. Residue 116-118 (NVR) coordinates substrate. A divalent metal cation-binding residues include histidine 153 and histidine 183. An important for dimerization region spans residues 248–283 (YAEFNLVYDRGTLFGLQSGGRTESILMSLPPIVHWE). Residue 266–268 (GGR) coordinates substrate.

The protein belongs to the aerobic coproporphyrinogen-III oxidase family. As to quaternary structure, homodimer. It depends on a divalent metal cation as a cofactor.

The protein resides in the cytoplasm. It carries out the reaction coproporphyrinogen III + O2 + 2 H(+) = protoporphyrinogen IX + 2 CO2 + 2 H2O. Its pathway is porphyrin-containing compound metabolism; protoporphyrin-IX biosynthesis; protoporphyrinogen-IX from coproporphyrinogen-III (O2 route): step 1/1. Its function is as follows. Involved in the heme biosynthesis. Catalyzes the aerobic oxidative decarboxylation of propionate groups of rings A and B of coproporphyrinogen-III to yield the vinyl groups in protoporphyrinogen-IX. The chain is Oxygen-dependent coproporphyrinogen-III oxidase from Legionella pneumophila (strain Corby).